Here is a 116-residue protein sequence, read N- to C-terminus: MAKMAMMVLCAGVTCMVVGAPYTEALSCGQVSSSLAPCISYLTKGGAVPPACCSGVKSLNSAAKTTPDRQAACGCLKSAYNSISGVNAGNAASFPGKCGVSIPYKISPSTDCSKVQ.

Residues 1 to 25 form the signal peptide; it reads MAKMAMMVLCAGVTCMVVGAPYTEA. 4 disulfide bridges follow: C28-C75, C38-C52, C53-C98, and C73-C112.

The protein belongs to the plant LTP family.

In terms of biological role, plant non-specific lipid-transfer proteins transfer phospholipids as well as galactolipids across membranes. May play a role in wax or cutin deposition in the cell walls of expanding epidermal cells and certain secretory tissues. The chain is Non-specific lipid-transfer protein from Helianthus annuus (Common sunflower).